We begin with the raw amino-acid sequence, 282 residues long: NADPH-dependent 7-cyano-7-deazaguanine reductase (282 aa).

Position 90–92 (90–92 (IES)) interacts with substrate. 92-93 (SK) serves as a coordination point for NADPH. The active-site Thioimide intermediate is Cys-190. Asp-197 acts as the Proton donor in catalysis. 229–230 (HE) is a substrate binding site. 258–259 (RG) provides a ligand contact to NADPH.

This sequence belongs to the GTP cyclohydrolase I family. QueF type 2 subfamily. In terms of assembly, homodimer.

It is found in the cytoplasm. The enzyme catalyses 7-aminomethyl-7-carbaguanine + 2 NADP(+) = 7-cyano-7-deazaguanine + 2 NADPH + 3 H(+). The protein operates within tRNA modification; tRNA-queuosine biosynthesis. Catalyzes the NADPH-dependent reduction of 7-cyano-7-deazaguanine (preQ0) to 7-aminomethyl-7-deazaguanine (preQ1). The sequence is that of NADPH-dependent 7-cyano-7-deazaguanine reductase from Aeromonas salmonicida (strain A449).